We begin with the raw amino-acid sequence, 293 residues long: Putative DNA glycosylase At3g47830 (293 aa).

A compositionally biased stretch (basic residues) spans 1–10; the sequence is MSKAQKRKRL. The tract at residues 1–34 is disordered; the sequence is MSKAQKRKRLNKYDGESKTPANKSTVDGGNPYPT. Residues N108 and K151 each coordinate DNA. Catalysis depends on K196, which acts as the Schiff-base intermediate with DNA. Residues H216 and D232 each contribute to the DNA site.

The protein belongs to the DNA glycosylase family.

The polypeptide is Putative DNA glycosylase At3g47830 (Arabidopsis thaliana (Mouse-ear cress)).